The sequence spans 218 residues: Adenylate kinase (218 aa).

Residue 10–15 (GAGKGT) participates in ATP binding. The segment at 30-59 (STGDMLRAAIQAQTPLGLEAKKVMDDGKLV) is NMP. AMP is bound by residues Thr-31, Arg-36, 57 to 59 (KLV), 85 to 88 (GFPR), and Gln-92. The interval 122-159 (GRRVHLASGRTYHVIFNPPKKEGVDDITGEPLIQREDD) is LID. ATP is bound by residues Arg-123 and 132–133 (TY). Positions 156 and 167 each coordinate AMP. Position 203 (Gly-203) interacts with ATP.

The protein belongs to the adenylate kinase family. In terms of assembly, monomer.

The protein resides in the cytoplasm. It carries out the reaction AMP + ATP = 2 ADP. Its pathway is purine metabolism; AMP biosynthesis via salvage pathway; AMP from ADP: step 1/1. In terms of biological role, catalyzes the reversible transfer of the terminal phosphate group between ATP and AMP. Plays an important role in cellular energy homeostasis and in adenine nucleotide metabolism. This is Adenylate kinase from Prosthecochloris aestuarii (strain DSM 271 / SK 413).